Here is a 245-residue protein sequence, read N- to C-terminus: Homeobox protein Hox-A4a (245 aa).

The segment at 34–99 (DYYERPKDPG…HGPRLTTESC (66 aa)) is disordered. Over residues 35–51 (YYERPKDPGFPHHEEAS) the composition is skewed to basic and acidic residues. Polar residues-rich tracts occupy residues 53–73 (PRSN…NDLN) and 82–99 (QPQS…TESC). The Antp-type hexapeptide signature appears at 126–131 (VYPWMK). A DNA-binding region (homeobox) is located at residues 147-206 (PKRSRTAYTRQQALELEKEFHFNRYLTRRRRVEIAHTMCLSERQVKIWFQNRRMKWKKDH). The interval 205-245 (DHKLPNTKIRSSSSAPSNHHVKTDATQQQQTLLPTPCSSNL) is disordered. Over residues 212–221 (KIRSSSSAPS) the composition is skewed to polar residues. Residues 230–245 (TQQQQTLLPTPCSSNL) are compositionally biased toward low complexity.

Belongs to the Antp homeobox family. Deformed subfamily.

It is found in the nucleus. Its function is as follows. Sequence-specific transcription factor which is part of a developmental regulatory system that provides cells with specific positional identities on the anterior-posterior axis. In Danio rerio (Zebrafish), this protein is Homeobox protein Hox-A4a (hoxa4a).